The chain runs to 515 residues: RNA exonuclease NGL2 (515 aa).

Disordered regions lie at residues M1–I54 and R353–E381. Over residues E21–N34 the composition is skewed to basic and acidic residues. The span at Q40–K52 shows a compositional bias: basic residues. The span at K369–E381 shows a compositional bias: basic and acidic residues.

The protein belongs to the CCR4/nocturin family.

It is found in the cytoplasm. Its subcellular location is the nucleus. Involved in pre-rRNA processing. Required for the final stage of 3'-end maturation of 5.8S rRNA at site E. The polypeptide is RNA exonuclease NGL2 (NGL2) (Saccharomyces cerevisiae (strain ATCC 204508 / S288c) (Baker's yeast)).